A 427-amino-acid chain; its full sequence is 3-phosphoshikimate 1-carboxyvinyltransferase (427 aa).

3 residues coordinate 3-phosphoshikimate: Lys22, Ser23, and Arg27. Lys22 is a binding site for phosphoenolpyruvate. Residues Gly96 and Arg124 each coordinate phosphoenolpyruvate. 3-phosphoshikimate is bound by residues Ser169, Ser170, Gln171, Ser197, Asp313, Asn336, and Lys340. A phosphoenolpyruvate-binding site is contributed by Gln171. The active-site Proton acceptor is the Asp313. Residues Arg344, Arg386, and Lys411 each contribute to the phosphoenolpyruvate site.

Belongs to the EPSP synthase family. Monomer.

The protein resides in the cytoplasm. It carries out the reaction 3-phosphoshikimate + phosphoenolpyruvate = 5-O-(1-carboxyvinyl)-3-phosphoshikimate + phosphate. The protein operates within metabolic intermediate biosynthesis; chorismate biosynthesis; chorismate from D-erythrose 4-phosphate and phosphoenolpyruvate: step 6/7. Its function is as follows. Catalyzes the transfer of the enolpyruvyl moiety of phosphoenolpyruvate (PEP) to the 5-hydroxyl of shikimate-3-phosphate (S3P) to produce enolpyruvyl shikimate-3-phosphate and inorganic phosphate. The polypeptide is 3-phosphoshikimate 1-carboxyvinyltransferase (Escherichia coli O17:K52:H18 (strain UMN026 / ExPEC)).